The primary structure comprises 110 residues: MSDTLTRLAQVLEERKGAAADSSYVASLYHKGLNKILEKVGEESVETIIAAKDAAVSGDCSDVIYETADLWFHSMVMLAQLGQHPQAVLDELDRRFGLSGHVEKASRPSA.

It belongs to the PRA-PH family.

Its subcellular location is the cytoplasm. It carries out the reaction 1-(5-phospho-beta-D-ribosyl)-ATP + H2O = 1-(5-phospho-beta-D-ribosyl)-5'-AMP + diphosphate + H(+). The protein operates within amino-acid biosynthesis; L-histidine biosynthesis; L-histidine from 5-phospho-alpha-D-ribose 1-diphosphate: step 2/9. This Pseudomonas fluorescens (strain Pf0-1) protein is Phosphoribosyl-ATP pyrophosphatase.